Reading from the N-terminus, the 216-residue chain is 3-isopropylmalate dehydratase small subunit (216 aa).

It belongs to the LeuD family. LeuD type 1 subfamily. In terms of assembly, heterodimer of LeuC and LeuD.

It carries out the reaction (2R,3S)-3-isopropylmalate = (2S)-2-isopropylmalate. The protein operates within amino-acid biosynthesis; L-leucine biosynthesis; L-leucine from 3-methyl-2-oxobutanoate: step 2/4. Functionally, catalyzes the isomerization between 2-isopropylmalate and 3-isopropylmalate, via the formation of 2-isopropylmaleate. The protein is 3-isopropylmalate dehydratase small subunit of Burkholderia mallei (strain NCTC 10247).